A 192-amino-acid polypeptide reads, in one-letter code: uncharacterized protein (192 aa).

In terms of domain architecture, Nudix hydrolase spans 29 to 160 (QRQAAVLVPV…PLDIHRRGNH (132 aa)). The short motif at 67-89 (GAVDDTDASLIAAALREAQEEVA) is the Nudix box element. The Mg(2+) site is built by Glu83 and Glu87.

Belongs to the Nudix hydrolase family. PCD1 subfamily. Mn(2+) is required as a cofactor. Requires Mg(2+) as cofactor.

Its function is as follows. Probably mediates the hydrolysis of some nucleoside diphosphate derivatives. This is an uncharacterized protein from Cronobacter sakazakii (strain ATCC BAA-894) (Enterobacter sakazakii).